Here is a 144-residue protein sequence, read N- to C-terminus: MCHARAARQATGEAEAAPRDNFSKAAGSKRVVGAAFETRAQRFLERAGLAPVARNVTVRGGEIDLVMRERDGTLVFVEVRARTSGRYGGAAASIGARKRMRLLHAAHLFWARMGGASACRFDVVAFEGGRLVWLRDAFRADETA.

Residues M1–D20 form a disordered region.

The protein belongs to the UPF0102 family.

The protein is UPF0102 protein BTH_I3148 of Burkholderia thailandensis (strain ATCC 700388 / DSM 13276 / CCUG 48851 / CIP 106301 / E264).